The sequence spans 629 residues: Ionotropic receptor 75a (629 aa).

Over 1–335 the chain is Extracellular; that stretch reads MQLVQLANFV…GDVFLQPFSP (335 aa). N-linked (GlcNAc...) asparagine glycosylation is found at N61, N112, N126, N144, N166, and N232. Residues 336-356 form a helical membrane-spanning segment; the sequence is LVWYLFGGVLSLIGVLLWITF. The Cytoplasmic segment spans residues 357 to 374; that stretch reads YMECKRMQKRWRLDYLPS. A helical membrane pass occupies residues 375-395; it reads LLSTFLISFGAACIQSSSLIP. Over 396–402 the chain is Extracellular; the sequence is RSAGGRL. A helical transmembrane segment spans residues 403–423; it reads IYFALFLISFIMYNYYTSVVV. Over 424-592 the chain is Cytoplasmic; that stretch reads SSLLSSPVKS…NFVITVGMEY (169 aa). The helical transmembrane segment at 593–613 threads the bilayer; that stretch reads VAPLLLMLICADILVVVILLV. At 614 to 629 the chain is on the extracellular side; sequence ELAWKRFFTRPLTIHP.

It belongs to the glutamate-gated ion channel (TC 1.A.10.1) family. As to expression, expressed in neurons in the antennal coeloconic 2 (ac2) sensillum class of sensory hairs (at protein level).

It is found in the cell membrane. The protein localises to the cell projection. Its subcellular location is the dendrite. Olfactory receptor for propionic, butyric and 2-oxopentanoic acids. The chain is Ionotropic receptor 75a from Drosophila sechellia (Fruit fly).